The primary structure comprises 482 residues: tRNA sulfurtransferase (482 aa).

The THUMP domain maps to 61–165; it reads LAIRDALTRI…DDRLLLIKGR (105 aa). ATP contacts are provided by residues 183–184, Lys-265, Gly-287, and Gln-296; that span reads LI. Cys-344 and Cys-456 are oxidised to a cystine. Positions 404–482 constitute a Rhodanese domain; the sequence is FGPNDVILDI…GFNNVKVYRP (79 aa). Cys-456 (cysteine persulfide intermediate) is an active-site residue.

The protein belongs to the ThiI family.

The protein localises to the cytoplasm. The catalysed reaction is [ThiI sulfur-carrier protein]-S-sulfanyl-L-cysteine + a uridine in tRNA + 2 reduced [2Fe-2S]-[ferredoxin] + ATP + H(+) = [ThiI sulfur-carrier protein]-L-cysteine + a 4-thiouridine in tRNA + 2 oxidized [2Fe-2S]-[ferredoxin] + AMP + diphosphate. It catalyses the reaction [ThiS sulfur-carrier protein]-C-terminal Gly-Gly-AMP + S-sulfanyl-L-cysteinyl-[cysteine desulfurase] + AH2 = [ThiS sulfur-carrier protein]-C-terminal-Gly-aminoethanethioate + L-cysteinyl-[cysteine desulfurase] + A + AMP + 2 H(+). Its pathway is cofactor biosynthesis; thiamine diphosphate biosynthesis. Functionally, catalyzes the ATP-dependent transfer of a sulfur to tRNA to produce 4-thiouridine in position 8 of tRNAs, which functions as a near-UV photosensor. Also catalyzes the transfer of sulfur to the sulfur carrier protein ThiS, forming ThiS-thiocarboxylate. This is a step in the synthesis of thiazole, in the thiamine biosynthesis pathway. The sulfur is donated as persulfide by IscS. The polypeptide is tRNA sulfurtransferase (Shigella boydii serotype 4 (strain Sb227)).